A 276-amino-acid polypeptide reads, in one-letter code: NADPH-dependent 7-cyano-7-deazaguanine reductase (276 aa).

Residue 83 to 85 coordinates substrate; sequence IES. 85–86 is an NADPH binding site; sequence SK. The Thioimide intermediate role is filled by cysteine 184. Aspartate 191 serves as the catalytic Proton donor. 223–224 is a binding site for substrate; it reads HE. Residue 252 to 253 coordinates NADPH; it reads RG.

Belongs to the GTP cyclohydrolase I family. QueF type 2 subfamily. Homodimer.

The protein localises to the cytoplasm. It carries out the reaction 7-aminomethyl-7-carbaguanine + 2 NADP(+) = 7-cyano-7-deazaguanine + 2 NADPH + 3 H(+). It functions in the pathway tRNA modification; tRNA-queuosine biosynthesis. Catalyzes the NADPH-dependent reduction of 7-cyano-7-deazaguanine (preQ0) to 7-aminomethyl-7-deazaguanine (preQ1). The protein is NADPH-dependent 7-cyano-7-deazaguanine reductase of Pseudomonas entomophila (strain L48).